Here is a 1077-residue protein sequence, read N- to C-terminus: FKBP12-associated protein 1 homolog (1077 aa).

Residues 1-173 (METSKNPSDL…MPKNSKEIKK (173 aa)) are disordered. The span at 15 to 29 (ANVKKNRRRFQKSQK) shows a compositional bias: basic residues. Residue serine 33 is modified to Phosphoserine. Over residues 52 to 64 (EEVKTSLKEDSSK) the composition is skewed to basic and acidic residues. Over residues 76–87 (PTSSVQLNVSKN) the composition is skewed to polar residues. Basic and acidic residues predominate over residues 100-116 (SSKDEELRKHAKGEGKR). Low complexity predominate over residues 136–149 (SSNSSQETSSSKGS). Residues 153 to 173 (KSERSREAKSRMPKNSKEIKK) are compositionally biased toward basic and acidic residues. An RING-type; atypical zinc finger spans residues 197–247 (CSVCTDTINPSTSIWSCGTCYHVFHLSCIRKWCKNSIEQRNEDAWRCPYCQ). 8 NF-X1-type zinc fingers span residues 290 to 308 (CEHP…PCTA), 348 to 367 (CGEH…ACFE), 420 to 441 (CGLH…HCPF), 485 to 503 (CGHR…TCSE), 541 to 558 (CGRH…SKAQ), 595 to 614 (CGNH…RCLE), 708 to 729 (CKTH…SCKK), and 738 to 760 (CEHV…PCKA). The region spanning 835-897 (SDFADEVESL…KRNVMVYNKG (63 aa)) is the R3H domain.

Belongs to the NFX1 family.

The protein localises to the cytoplasm. It is found in the golgi apparatus. The protein resides in the nucleus. Functionally, may play a role in transcription regulation. The polypeptide is FKBP12-associated protein 1 homolog (fap1) (Schizosaccharomyces pombe (strain 972 / ATCC 24843) (Fission yeast)).